A 265-amino-acid polypeptide reads, in one-letter code: Flavin-dependent thymidylate synthase (265 aa).

The region spanning 11–224 (GFLKLIDFMG…PIAFNSFENH (214 aa)) is the ThyX domain. FAD contacts are provided by residues Ser-56, 79–81 (RHR), and Glu-87. 76 to 79 (QWMR) lines the dUMP pocket. A ThyX motif motif is present at residues 79–89 (RHRTARINEVS). Arg-155 is a dUMP binding site. Residues 171-173 (DLN) and His-177 each bind FAD. Arg-182 lines the dUMP pocket. The active-site Involved in ionization of N3 of dUMP, leading to its activation is Arg-182.

Belongs to the thymidylate synthase ThyX family. As to quaternary structure, homotetramer. The cofactor is FAD.

The enzyme catalyses dUMP + (6R)-5,10-methylene-5,6,7,8-tetrahydrofolate + NADPH + H(+) = dTMP + (6S)-5,6,7,8-tetrahydrofolate + NADP(+). It participates in pyrimidine metabolism; dTTP biosynthesis. Functionally, catalyzes the reductive methylation of 2'-deoxyuridine-5'-monophosphate (dUMP) to 2'-deoxythymidine-5'-monophosphate (dTMP) while utilizing 5,10-methylenetetrahydrofolate (mTHF) as the methyl donor, and NADPH and FADH(2) as the reductant. In Borreliella burgdorferi (strain ATCC 35210 / DSM 4680 / CIP 102532 / B31) (Borrelia burgdorferi), this protein is Flavin-dependent thymidylate synthase.